A 151-amino-acid chain; its full sequence is Small ribosomal subunit protein uS11 (151 aa).

The tract at residues 130-151 (EDVTPIPSDSTRRKGGRRGRRL) is disordered. Positions 142–151 (RKGGRRGRRL) are enriched in basic residues.

This sequence belongs to the universal ribosomal protein uS11 family.

The sequence is that of Small ribosomal subunit protein uS11 from Aedes aegypti (Yellowfever mosquito).